Reading from the N-terminus, the 193-residue chain is dCTP deaminase (193 aa).

Residues 110–115, Asp128, 136–138, Tyr171, Lys178, and Gln182 each bind dCTP; these read RSSLAR and VLE. The active-site Proton donor/acceptor is the Glu138. Residues 169–193 are disordered; the sequence is RPYNRREDAKYRNQQGAVASRIDKD.

It belongs to the dCTP deaminase family. In terms of assembly, homotrimer.

The catalysed reaction is dCTP + H2O + H(+) = dUTP + NH4(+). Its pathway is pyrimidine metabolism; dUMP biosynthesis; dUMP from dCTP (dUTP route): step 1/2. In terms of biological role, catalyzes the deamination of dCTP to dUTP. This chain is dCTP deaminase, found in Sodalis glossinidius (strain morsitans).